We begin with the raw amino-acid sequence, 62 residues long: Kurtoxin-like I (62 aa).

Residues 2 to 62 (IDGYPVDNWN…ARIKRGGRCN (61 aa)) enclose the LCN-type CS-alpha/beta domain. Intrachain disulfides connect Cys-12-Cys-61, Cys-16-Cys-37, Cys-23-Cys-44, and Cys-27-Cys-46.

As to expression, expressed by the venom gland.

Its subcellular location is the secreted. Functionally, this neurotoxin acts on sodium and calcium channels. Potently inhibits native voltage-gated T-type calcium channel activity in mouse male germ cells and weakly blocks Cav3.3/CACNA1I channels expressed in Xenopus oocytes. In addition, significantly slows the inactivation of activated recombinant sodium channels (Nav1.5/SCN5A). This Parabuthus granulatus (Granulated thick-tailed scorpion) protein is Kurtoxin-like I.